Reading from the N-terminus, the 283-residue chain is Probable endonuclease 4 (283 aa).

Residues His67, His107, Glu144, Asp178, His181, His215, Asp228, His230, and Glu260 each contribute to the Zn(2+) site.

Belongs to the AP endonuclease 2 family. Zn(2+) is required as a cofactor.

It carries out the reaction Endonucleolytic cleavage to 5'-phosphooligonucleotide end-products.. Its function is as follows. Endonuclease IV plays a role in DNA repair. It cleaves phosphodiester bonds at apurinic or apyrimidinic (AP) sites, generating a 3'-hydroxyl group and a 5'-terminal sugar phosphate. In Geobacter sp. (strain M21), this protein is Probable endonuclease 4.